Reading from the N-terminus, the 287-residue chain is Small ribosomal subunit biogenesis GTPase RsgA (287 aa).

Residues 61–218 (SSELIRPTVA…LVDTPGFTTL (158 aa)) form the CP-type G domain. Residues 110–113 (NKED) and 161–169 (GPSGAGKST) contribute to the GTP site. Zn(2+) is bound by residues cysteine 242, cysteine 247, histidine 249, and cysteine 255.

This sequence belongs to the TRAFAC class YlqF/YawG GTPase family. RsgA subfamily. Monomer. Associates with 30S ribosomal subunit, binds 16S rRNA. The cofactor is Zn(2+).

The protein resides in the cytoplasm. Its function is as follows. One of several proteins that assist in the late maturation steps of the functional core of the 30S ribosomal subunit. Helps release RbfA from mature subunits. May play a role in the assembly of ribosomal proteins into the subunit. Circularly permuted GTPase that catalyzes slow GTP hydrolysis, GTPase activity is stimulated by the 30S ribosomal subunit. In Clostridium perfringens (strain SM101 / Type A), this protein is Small ribosomal subunit biogenesis GTPase RsgA.